We begin with the raw amino-acid sequence, 199 residues long: UPF0301 protein Ajs_3573 (199 aa).

The protein belongs to the UPF0301 (AlgH) family.

The protein is UPF0301 protein Ajs_3573 of Acidovorax sp. (strain JS42).